A 141-amino-acid chain; its full sequence is Large ribosomal subunit protein uL11 (141 aa).

Belongs to the universal ribosomal protein uL11 family. In terms of assembly, part of the ribosomal stalk of the 50S ribosomal subunit. Interacts with L10 and the large rRNA to form the base of the stalk. L10 forms an elongated spine to which L12 dimers bind in a sequential fashion forming a multimeric L10(L12)X complex. In terms of processing, one or more lysine residues are methylated.

Functionally, forms part of the ribosomal stalk which helps the ribosome interact with GTP-bound translation factors. This Ruegeria pomeroyi (strain ATCC 700808 / DSM 15171 / DSS-3) (Silicibacter pomeroyi) protein is Large ribosomal subunit protein uL11.